Reading from the N-terminus, the 388-residue chain is D-xylose dehydrogenase (388 aa).

It belongs to the Gfo/Idh/MocA family. As to quaternary structure, homotetramer. Zn(2+) is required as a cofactor.

The catalysed reaction is D-xylose + NADP(+) = D-xylono-1,5-lactone + NADPH + H(+). The enzyme catalyses D-xylose + NAD(+) = D-xylono-1,5-lactone + NADH + H(+). Its pathway is carbohydrate metabolism; D-xylose degradation. In terms of biological role, catalyzes the NADP(+)-dependent oxidation of D-xylose. Is able to use both NADP(+) and NAD(+); however, the enzyme shows a very strong preference for NADP(+). Is likely involved in the first step of the oxidative D-xylose degradation pathway. The polypeptide is D-xylose dehydrogenase (xdh) (Paenarthrobacter nicotinovorans (Arthrobacter nicotinovorans)).